The primary structure comprises 292 residues: tRNA-cytidine(32) 2-sulfurtransferase (292 aa).

Positions 62–67 match the PP-loop motif motif; that stretch reads SGGKDS. [4Fe-4S] cluster contacts are provided by cysteine 137, cysteine 140, and cysteine 228.

It belongs to the TtcA family. In terms of assembly, homodimer. Mg(2+) is required as a cofactor. It depends on [4Fe-4S] cluster as a cofactor.

It localises to the cytoplasm. The catalysed reaction is cytidine(32) in tRNA + S-sulfanyl-L-cysteinyl-[cysteine desulfurase] + AH2 + ATP = 2-thiocytidine(32) in tRNA + L-cysteinyl-[cysteine desulfurase] + A + AMP + diphosphate + H(+). The protein operates within tRNA modification. Functionally, catalyzes the ATP-dependent 2-thiolation of cytidine in position 32 of tRNA, to form 2-thiocytidine (s(2)C32). The sulfur atoms are provided by the cysteine/cysteine desulfurase (IscS) system. This Brucella anthropi (strain ATCC 49188 / DSM 6882 / CCUG 24695 / JCM 21032 / LMG 3331 / NBRC 15819 / NCTC 12168 / Alc 37) (Ochrobactrum anthropi) protein is tRNA-cytidine(32) 2-sulfurtransferase.